We begin with the raw amino-acid sequence, 271 residues long: Shikimate dehydrogenase (NADP(+)) (271 aa).

Residues 14 to 16 and Thr61 each bind shikimate; that span reads SLS. Residue Lys65 is the Proton acceptor of the active site. Residues Asn86 and Asp101 each contribute to the shikimate site. NADP(+)-binding positions include 125-129 and Ile212; that span reads GAGGA. Tyr214 contributes to the shikimate binding site. NADP(+) is bound at residue Gly235.

This sequence belongs to the shikimate dehydrogenase family. In terms of assembly, homodimer.

The enzyme catalyses shikimate + NADP(+) = 3-dehydroshikimate + NADPH + H(+). It functions in the pathway metabolic intermediate biosynthesis; chorismate biosynthesis; chorismate from D-erythrose 4-phosphate and phosphoenolpyruvate: step 4/7. In terms of biological role, involved in the biosynthesis of the chorismate, which leads to the biosynthesis of aromatic amino acids. Catalyzes the reversible NADPH linked reduction of 3-dehydroshikimate (DHSA) to yield shikimate (SA). This Clostridium perfringens (strain 13 / Type A) protein is Shikimate dehydrogenase (NADP(+)).